A 694-amino-acid chain; its full sequence is DNA-binding protein RFX2 (694 aa).

Residues 174-249 (HLQWLLDNYE…YHYYGIRLKP (76 aa)) constitute a DNA-binding region (RFX-type winged-helix). Disordered stretches follow at residues 267-310 (QQPI…QHHQ) and 658-694 (KDDV…MQEM). Residues 289-299 (PANSSQHASPE) are compositionally biased toward polar residues. Residues 300-310 (QSVAAQSQHHQ) are compositionally biased toward low complexity.

It belongs to the RFX family. As to quaternary structure, homodimer. Heterodimer; heterodimerizes with other rfx proteins. In terms of tissue distribution, preferentially expressed in ciliated tissues, such as neural tube, gastrocoel roof plate, epidermal multiciliated cells, otic vesicles and kidneys.

The protein resides in the nucleus. Its subcellular location is the cytoplasm. In terms of biological role, transcription factor that acts as a key regulator of ciliogenesis. Specifically regulates expression of genes required for cilium assembly and function. Recognizes and binds the X-box, a regulatory motif with DNA sequence 5'-GTNRCC(0-3N)RGYAAC-3' present on promoters. Required for neural tube closure and neural ciliogenesis. This Xenopus laevis (African clawed frog) protein is DNA-binding protein RFX2 (rfx2).